The following is a 144-amino-acid chain: HTH-type transcriptional regulator MntR (144 aa).

One can recognise an HTH dtxR-type domain in the interval 1-63 (MTTPSMEDYI…YEKYRGLILT (63 aa)). Residues D8, E11, H77, E99, E102, and H103 each contribute to the Mn(2+) site.

This sequence belongs to the DtxR/MntR family. Homodimer.

The protein resides in the cytoplasm. DNA binding is strongly activated by Mn(2+). In terms of biological role, central regulator of manganese homeostasis. The sequence is that of HTH-type transcriptional regulator MntR from Bacillus pumilus (strain SAFR-032).